The primary structure comprises 429 residues: C4-dicarboxylate transport protein (429 aa).

The next 8 membrane-spanning stretches (helical) occupy residues 9 to 29 (VLYVQVIFAIIVGVILGHFYP), 45 to 65 (LIKMVIGPIIFCTVVTGIAGM), 79 to 99 (LLYFEVVSTFALLLGLAATHI), 149 to 169 (GEILQILLIALLFGSVLAHLG), 185 to 205 (VLFGIVHIVTKLAPIGAFGAM), 223 to 243 (LIGTFYLTSIVFVLVVLGTIA), 308 to 328 (IYMTMAVLFIAQATNIELTWM), and 356 to 376 (AATLAVVPTIPLSGMVLILGI).

The protein belongs to the dicarboxylate/amino acid:cation symporter (DAACS) (TC 2.A.23) family.

It localises to the cell inner membrane. Functionally, responsible for the transport of dicarboxylates such as succinate, fumarate, and malate from the periplasm across the membrane. This is C4-dicarboxylate transport protein from Burkholderia ambifaria (strain MC40-6).